Reading from the N-terminus, the 166-residue chain is Telethonin (166 aa).

Serine 39 is modified (phosphoserine). The disordered stretch occupies residues 145-166 (VSKPGTLRRSLSRSMSQEAQRG). A compositionally biased stretch (polar residues) spans 156-166 (SRSMSQEAQRG).

As to quaternary structure, interacts with MYOZ1, MYOZ2 and MYOZ3. Interacts with CSRP3. Interacts directly with the N-terminal Ig-like domains of 2 titin (TTN) molecules. Interacts with ANKRD2; the interaction is direct.

It localises to the cytoplasm. The protein localises to the myofibril. The protein resides in the sarcomere. Functionally, muscle assembly regulating factor. Mediates the antiparallel assembly of titin (TTN) molecules at the sarcomeric Z-disk. In Bos taurus (Bovine), this protein is Telethonin (TCAP).